A 188-amino-acid polypeptide reads, in one-letter code: GPI-anchored hemophore ARB_01017 (188 aa).

The signal sequence occupies residues 1–17 (MKLSVVALAALVSVAAA). The CFEM domain occupies 18 to 107 (QGVSELPKCA…SSSSGSASST (90 aa)). 4 disulfides stabilise this stretch: C26/C64, C30/C59, C39/C45, and C47/C80. D42 contacts heme. Positions 95–163 (TGGSSSSGSA…ATSTGAPTQT (69 aa)) are disordered. N165 carries GPI-anchor amidated asparagine lipidation. Positions 166-188 (AAASVNANGGLLAAIAALVIAVA) are cleaved as a propeptide — removed in mature form.

It belongs to the RBT5 family. In terms of processing, the GPI-anchor is attached to the protein in the endoplasmic reticulum and serves to target the protein to the cell surface. There, the glucosamine-inositol phospholipid moiety is cleaved off and the GPI-modified mannoprotein is covalently attached via its lipidless GPI glycan remnant to the 1,6-beta-glucan of the outer cell wall layer.

Its subcellular location is the secreted. The protein localises to the cell wall. It is found in the cell membrane. Its function is as follows. GPI-anchored cell wall protein involved in stabilizing the cell wall. This Arthroderma benhamiae (strain ATCC MYA-4681 / CBS 112371) (Trichophyton mentagrophytes) protein is GPI-anchored hemophore ARB_01017.